A 151-amino-acid polypeptide reads, in one-letter code: PTITNDGVSIAKEIELEDPYEKIGAELVKEVAKKTDDVAGDGTTTATVLAQALVREGLRNVAAGANPLGLKRGIEKAVEKVTETLLKSAKEVETKDQIAATAAISAGDQSIGDLIAEAMDKVGNEGVITVEESNTFGLQLELTEGMRFDKG.

Position 41–45 (41–45 (DGTTT)) interacts with ATP.

Belongs to the chaperonin (HSP60) family. As to quaternary structure, forms a cylinder of 14 subunits composed of two heptameric rings stacked back-to-back. Interacts with the co-chaperonin GroES.

The protein resides in the cytoplasm. It carries out the reaction ATP + H2O + a folded polypeptide = ADP + phosphate + an unfolded polypeptide.. Functionally, together with its co-chaperonin GroES, plays an essential role in assisting protein folding. The GroEL-GroES system forms a nano-cage that allows encapsulation of the non-native substrate proteins and provides a physical environment optimized to promote and accelerate protein folding. The chain is Chaperonin GroEL from Mycobacterium avium.